Here is a 99-residue protein sequence, read N- to C-terminus: SAGA-associated factor 11 (99 aa).

Residues 71-92 (IHCENCGRDVSANRLAAHLQRC) form an SGF11-type zinc finger.

Belongs to the SGF11 family. As to quaternary structure, component of the 1.8 MDa SAGA transcription coactivator-HAT complex. SAGA is built of 5 distinct domains with specialized functions. Within the SAGA complex, SUS1, SGF11, SGF73 and UBP8 form an additional subcomplex of SAGA called the DUB module (deubiquitination module). Interacts directly with SGF73, SUS1 and UBP8.

The protein resides in the nucleus. In terms of biological role, functions as a component of the transcription regulatory histone acetylation (HAT) complex SAGA. At the promoters, SAGA is required for recruitment of the basal transcription machinery. It influences RNA polymerase II transcriptional activity through different activities such as TBP interaction and promoter selectivity, interaction with transcription activators, and chromatin modification through histone acetylation and deubiquitination. SAGA acetylates nucleosomal histone H3 to some extent (to form H3K9ac, H3K14ac, H3K18ac and H3K23ac). SAGA interacts with DNA via upstream activating sequences (UASs). Involved in transcriptional regulation of a subset of SAGA-regulated genes. Within the SAGA complex, participates in a subcomplex, that specifically deubiquitinates histones H2B. The chain is SAGA-associated factor 11 from Saccharomyces cerevisiae (strain RM11-1a) (Baker's yeast).